The sequence spans 256 residues: L-erythrulose-1-phosphate isomerase (256 aa).

His-96 serves as the catalytic Electrophile. Glu-169 functions as the Proton acceptor in the catalytic mechanism. Substrate-binding residues include Gly-175 and Ser-212.

Belongs to the triosephosphate isomerase family. In terms of assembly, homodimer.

The protein resides in the cytoplasm. It carries out the reaction L-erythrulose 1-phosphate = D-erythrulose 4-phosphate. It participates in carbohydrate metabolism; erythritol degradation. Functionally, catalyzes the isomerization of D-erythrulose-4P to L-erythrulose-1P. Involved in the degradation pathway of erythritol, that allows B.abortus to grow on this compound as the sole carbon source. In Brucella abortus (strain 2308), this protein is L-erythrulose-1-phosphate isomerase.